The chain runs to 312 residues: Ornithine carbamoyltransferase (312 aa).

Carbamoyl phosphate is bound by residues Ser-50 to Thr-53, Gln-77, Arg-101, and His-128 to Gln-131. Residues Asn-159, Asp-223, and Ser-227–Met-228 contribute to the L-ornithine site. Carbamoyl phosphate-binding positions include Cys-263–Leu-264 and Arg-291.

This sequence belongs to the aspartate/ornithine carbamoyltransferase superfamily. OTCase family.

It is found in the cytoplasm. It catalyses the reaction carbamoyl phosphate + L-ornithine = L-citrulline + phosphate + H(+). Its pathway is amino-acid biosynthesis; L-arginine biosynthesis; L-arginine from L-ornithine and carbamoyl phosphate: step 1/3. Its function is as follows. Reversibly catalyzes the transfer of the carbamoyl group from carbamoyl phosphate (CP) to the N(epsilon) atom of ornithine (ORN) to produce L-citrulline. The polypeptide is Ornithine carbamoyltransferase (Acidothermus cellulolyticus (strain ATCC 43068 / DSM 8971 / 11B)).